The chain runs to 890 residues: MITTNEIRRSFLEYFEKNGHRIVPSAPLVPQNDPTLMFVNAGMVPFKNTFTGLESRPYKTATSSQKCVRAGGKHNDLDNVGYTARHHTFFEMLGNFSFGDYFKERVIELAWGLITKEWGLDPERLCVTVYHTDEEAFNLWRKIAGLPEDRIIKIATSDNFWSMGDTGPCGPCSEIFYDHGPEIPGGPPGSPDEDGDRFVEIWNLVFMQYEQVNAETRLNLPRPSIDTGMGLERIASVLQGVHDNYDTDTFKALIAASGELTHTATDGQFKASHRVIADHLRAAGFLVADGVLPANEGRGYVLRRIMRRAMRHAHLIGAKEPLMYRLVPALLSEMGMAYPELVRAKALIEETLRLEETRFRQTLANGLKILEDETQHLKSGDTLPGAVAFRLYDTYGFPYDLTADALRARNLTVDQAGFDAAMAEQRKAARAAWKGSGEKASDEIWFDIADQLGGTEFTGYTAEKGSGQIIALIKDGKRVETAKQGDDITIITNQTPFYGESGGQKGDIGVITGNNDLKMTVTDTQKPLGRIHAHIAKIEKGEIKIGDDIQLQVDINHRNRLRANHSATHLLHAALRDQLGQHVSQKGSMVSAERLRFDFSHQKALSDQELAAIEAEVNQQILNNSVVTTRLMTPESAVEAGAMALFGEKYGNEVRVLSMGSCLNDQNEESSWSVELCGGTHVSALGQIGLFHIVSETAVSSGIRRIEAVTGEEARLWLVGRDRLLRETASILKAVPEEVPTRTAAILDERRKSERALADAQKALALANANGGQGGNNAAPEKVGAYQFIGQVIEGLDPKALRGLIDENKKIIESGVIALITVNEGRASVAIGVSDSLKDKISAVDLVRKAVETLGGKGGGGRPDMAQGGGPNGNEAAQALEAVKALLEKA.

4 residues coordinate Zn(2+): H565, H569, C677, and H681.

Belongs to the class-II aminoacyl-tRNA synthetase family. Zn(2+) is required as a cofactor.

The protein resides in the cytoplasm. The catalysed reaction is tRNA(Ala) + L-alanine + ATP = L-alanyl-tRNA(Ala) + AMP + diphosphate. In terms of biological role, catalyzes the attachment of alanine to tRNA(Ala) in a two-step reaction: alanine is first activated by ATP to form Ala-AMP and then transferred to the acceptor end of tRNA(Ala). Also edits incorrectly charged Ser-tRNA(Ala) and Gly-tRNA(Ala) via its editing domain. This is Alanine--tRNA ligase from Zymomonas mobilis subsp. mobilis (strain ATCC 31821 / ZM4 / CP4).